A 261-amino-acid polypeptide reads, in one-letter code: X-box-binding protein 1 (261 aa).

At 1-185 (MVVVAAAPNP…VQAQLSPLQN (185 aa)) the chain is on the cytoplasmic side. The segment at 44-93 (RGASPEAASGGLPQARKRQRLTHLSPEEKALRRKLKNRVAAQTARDRKKA) is disordered. A phosphoserine mark is found at Ser47 and Ser68. One can recognise a bZIP domain in the interval 70-133 (EEKALRRKLK…HGLVVENQEL (64 aa)). Positions 72-94 (KALRRKLKNRVAAQTARDRKKAR) are basic motif. Residues 75-92 (RRKLKNRVAAQTARDRKK) are nuclear localization signal (NLS); in isoforms 1 and isoform 2. Residues 98–133 (LEQQVVDLEEENQKLLLENQLLREKTHGLVVENQEL) form a leucine-zipper region. Residues 186-203 (ISPWILAVLTLQIQSLIS) form a helical; Signal-anchor for type II membrane protein membrane-spanning segment. At 204–261 (CWAFWTTWTQSCSSNALPQSLPAWRSSQRSTQKDPVPYQPPFLCQWGRHQPSWKPLMN) the chain is on the lumenal side. The tract at residues 235 to 261 (QKDPVPYQPPFLCQWGRHQPSWKPLMN) is necessary for the translational pausing of its own mRNA.

The protein belongs to the bZIP family. Isoform 2 interacts with SIRT1. Isoform 2 interacts with PIK3R1 and PIK3R2; the interactions are direct and induce translocation of XBP1 isoform 2 into the nucleus and the unfolded protein response (UPR) XBP1-dependent target genes activation in a ER stress- and/or insulin-dependent but PI3K-independent manner. Isoform 2 interacts with FOXO1; the interaction is direct and leads to FOXO1 ubiquitination and degradation via the proteasome pathway in hepatocytes. Isoform 1 interacts with HM13. Isoform 1 interacts with RNF139; the interaction induces ubiquitination and degradation of isoform 1. Isoform 1 interacts (via luminal domain) with DERL1; the interaction obviates the need for ectodomain shedding prior HM13/SPP-mediated XBP1 isoform 1 cleavage. Isoform 1 interacts with isoform 2; the interaction sequesters isoform 2 from the nucleus and enhances isoform 2 degradation in the cytoplasm. Isoform 1 interacts with HDAC3 and AKT1; the interactions occur in endothelial cell (EC) under disturbed flow. Isoform 1 interacts with the oncoprotein FOS. Isoform 2 interacts with ATF6; the interaction occurs in a ER stress-dependent manner and is required for DNA binding to the unfolded protein response element (UPRE). Isoform 2 interacts with PIK3R1; the interaction is direct and induces translocation of XBP1 isoform 2 into the nucleus and the unfolded protein response (UPR) XBP1-dependent target genes activation in a ER stress- and/or insulin-dependent but PI3K-independent manner. Post-translationally, acetylated by EP300; acetylation positively regulates the transcriptional activity of XBP1 isoform 2. Isoform 2 is deacetylated by SIRT1; deacetylation negatively regulates the transcriptional activity of XBP1 isoform 2. Ubiquitinated, leading to proteasome-mediated degradation in response to ER stress. In terms of processing, X-box-binding protein 1, cytoplasmic form and luminal form are produced by intramembrane proteolytic cleavage of ER membrane-anchored isoform 1 triggered by HM13/SPP in a DERL1-RNF139-dependent and VCP/p97-independent manner. X-box-binding protein 1, luminal form is ubiquitinated leading to proteasomal degradation. In terms of tissue distribution, expressed in plasma cells in rheumatoid synovium. Over-expressed in primary breast cancer and metastatic breast cancer cells. Isoform 1 and isoform 2 are expressed at higher level in proliferating as compared to confluent quiescent endothelial cells.

Its subcellular location is the endoplasmic reticulum. It is found in the nucleus. It localises to the cytoplasm. The protein resides in the endoplasmic reticulum membrane. The protein localises to the membrane. Its function is as follows. Functions as a transcription factor during endoplasmic reticulum (ER) stress by regulating the unfolded protein response (UPR). Required for cardiac myogenesis and hepatogenesis during embryonic development, and the development of secretory tissues such as exocrine pancreas and salivary gland. Involved in terminal differentiation of B lymphocytes to plasma cells and production of immunoglobulins. Modulates the cellular response to ER stress in a PIK3R-dependent manner. Binds to the cis-acting X box present in the promoter regions of major histocompatibility complex class II genes. Involved in VEGF-induced endothelial cell (EC) proliferation and retinal blood vessel formation during embryonic development but also for angiogenesis in adult tissues under ischemic conditions. Also functions as a major regulator of the UPR in obesity-induced insulin resistance and type 2 diabetes for the management of obesity and diabetes prevention. In terms of biological role, plays a role in the unconventional cytoplasmic splicing processing of its own mRNA triggered by the endoplasmic reticulum (ER) transmembrane endoribonuclease ERN1: upon ER stress, the emerging XBP1 polypeptide chain, as part of a mRNA-ribosome-nascent chain (R-RNC) complex, cotranslationally recruits its own unprocessed mRNA through transient docking to the ER membrane and translational pausing, therefore facilitating efficient IRE1-mediated XBP1 mRNA isoform 2 production. In endothelial cells (EC), associated with KDR, promotes IRE1-mediated XBP1 mRNA isoform 2 productions in a vascular endothelial growth factor (VEGF)-dependent manner, leading to EC proliferation and angiogenesis. Functions as a negative feed-back regulator of the potent transcription factor XBP1 isoform 2 protein levels through proteasome-mediated degradation, thus preventing the constitutive activation of the ER stress response signaling pathway. Inhibits the transactivation activity of XBP1 isoform 2 in myeloma cells. Acts as a weak transcriptional factor. Together with HDAC3, contributes to the activation of NFE2L2-mediated HMOX1 transcription factor gene expression in a PI(3)K/mTORC2/Akt-dependent signaling pathway leading to EC survival under disturbed flow/oxidative stress. Binds to the ER stress response element (ERSE) upon ER stress. Binds to the consensus 5'-GATGACGTG[TG]N(3)[AT]T-3' sequence related to cAMP responsive element (CRE)-like sequences. Binds the Tax-responsive element (TRE) present in the long terminal repeat (LTR) of T-cell leukemia virus type 1 (HTLV-I) and to the TPA response elements (TRE). Associates preferentially to the HDAC3 gene promoter region in a static flow-dependent manner. Binds to the CDH5/VE-cadherin gene promoter region. Functions as a stress-inducible potent transcriptional activator during endoplasmic reticulum (ER) stress by inducing unfolded protein response (UPR) target genes via binding to the UPR element (UPRE). Up-regulates target genes encoding ER chaperones and ER-associated degradation (ERAD) components to enhance the capacity of productive folding and degradation mechanism, respectively, in order to maintain the homeostasis of the ER under ER stress. Plays a role in the production of immunoglobulins and interleukin-6 in the presence of stimuli required for plasma cell differentiation. Induces phospholipid biosynthesis and ER expansion. Contributes to the VEGF-induced endothelial cell (EC) growth and proliferation in a Akt/GSK-dependent and/or -independent signaling pathway, respectively, leading to beta-catenin nuclear translocation and E2F2 gene expression. Promotes umbilical vein EC apoptosis and atherosclerotisis development in a caspase-dependent signaling pathway, and contributes to VEGF-induced EC proliferation and angiogenesis in adult tissues under ischemic conditions. Involved in the regulation of endostatin-induced autophagy in EC through BECN1 transcriptional activation. Plays a role as an oncogene by promoting tumor progression: stimulates zinc finger protein SNAI1 transcription to induce epithelial-to-mesenchymal (EMT) transition, cell migration and invasion of breast cancer cells. Involved in adipocyte differentiation by regulating lipogenic gene expression during lactation. Plays a role in the survival of both dopaminergic neurons of the substantia nigra pars compacta (SNpc), by maintaining protein homeostasis and of myeloma cells. Increases insulin sensitivity in the liver as a response to a high carbohydrate diet, resulting in improved glucose tolerance. Also improves glucose homeostasis in an ER stress- and/or insulin-independent manner through both binding and proteasome-induced degradation of the transcription factor FOXO1, hence resulting in suppression of gluconeogenic genes expression and in a reduction of blood glucose levels. Controls the induction of de novo fatty acid synthesis in hepatocytes by regulating the expression of a subset of lipogenic genes in an ER stress- and UPR-independent manner. Associates preferentially to the HDAC3 gene promoter region in a disturbed flow-dependent manner. Binds to the BECN1 gene promoter region. Binds to the CDH5/VE-cadherin gene promoter region. Binds to the ER stress response element (ERSE) upon ER stress. Binds to the 5'-CCACG-3' motif in the PPARG promoter. The protein is X-box-binding protein 1 of Homo sapiens (Human).